Reading from the N-terminus, the 669-residue chain is DNA ligase (669 aa).

NAD(+) is bound by residues 34–38, 83–84, and E114; these read DAEYD and SL. K116 acts as the N6-AMP-lysine intermediate in catalysis. 4 residues coordinate NAD(+): R137, E171, K287, and K311. Zn(2+) is bound by residues C405, C408, C423, and C428. The BRCT domain occupies 591–669; it reads NVESYFAGKT…EERFLQELNK (79 aa).

Belongs to the NAD-dependent DNA ligase family. LigA subfamily. It depends on Mg(2+) as a cofactor. Mn(2+) serves as cofactor.

It catalyses the reaction NAD(+) + (deoxyribonucleotide)n-3'-hydroxyl + 5'-phospho-(deoxyribonucleotide)m = (deoxyribonucleotide)n+m + AMP + beta-nicotinamide D-nucleotide.. Functionally, DNA ligase that catalyzes the formation of phosphodiester linkages between 5'-phosphoryl and 3'-hydroxyl groups in double-stranded DNA using NAD as a coenzyme and as the energy source for the reaction. It is essential for DNA replication and repair of damaged DNA. The chain is DNA ligase from Bacillus cereus (strain G9842).